An 82-amino-acid chain; its full sequence is RNA-binding protein Hfq (82 aa).

The region spanning 11–71 is the Sm domain; it reads DTFLNSVRKS…ISTIMPAQPV (61 aa).

This sequence belongs to the Hfq family. As to quaternary structure, homohexamer.

Functionally, RNA chaperone that binds small regulatory RNA (sRNAs) and mRNAs to facilitate mRNA translational regulation in response to envelope stress, environmental stress and changes in metabolite concentrations. Also binds with high specificity to tRNAs. The sequence is that of RNA-binding protein Hfq from Caulobacter sp. (strain K31).